A 333-amino-acid polypeptide reads, in one-letter code: Nucleoid-associated protein VV1_3120 (333 aa).

This sequence belongs to the YejK family.

It is found in the cytoplasm. The protein resides in the nucleoid. The sequence is that of Nucleoid-associated protein VV1_3120 from Vibrio vulnificus (strain CMCP6).